We begin with the raw amino-acid sequence, 229 residues long: Potassium/proton antiporter CemA (229 aa).

A run of 3 helical transmembrane segments spans residues F7–F27, M106–W126, and I189–I209.

The protein belongs to the CemA family.

The protein resides in the plastid membrane. It carries out the reaction K(+)(in) + H(+)(out) = K(+)(out) + H(+)(in). Its function is as follows. May be involved in proton extrusion. The sequence is that of Potassium/proton antiporter CemA from Cuscuta reflexa (Southern Asian dodder).